The following is a 235-amino-acid chain: Small ribosomal subunit protein eS6 (235 aa).

The segment at 190-212 (GFHPRERGERRRKSVRGRMIPDP) is disordered.

It belongs to the eukaryotic ribosomal protein eS6 family.

This Aeropyrum pernix (strain ATCC 700893 / DSM 11879 / JCM 9820 / NBRC 100138 / K1) protein is Small ribosomal subunit protein eS6.